Reading from the N-terminus, the 495-residue chain is Probable aspartic-type endopeptidase OPSB (495 aa).

The first 19 residues, Met1–Thr19, serve as a signal peptide directing secretion. Positions Tyr73 to Ala408 constitute a Peptidase A1 domain. Asn76 carries an N-linked (GlcNAc...) asparagine glycan. Residue Asp91 is part of the active site. Asn136 carries N-linked (GlcNAc...) asparagine glycosylation. Asp290 is a catalytic residue. An N-linked (GlcNAc...) asparagine glycan is attached at Asn413. Positions Thr448–Gln470 are disordered. A lipid anchor (GPI-anchor amidated alanine) is attached at Ala467. Positions Ala468–Met495 are cleaved as a propeptide — removed in mature form.

Belongs to the peptidase A1 family.

The protein resides in the cell membrane. Probable GPI-anchored aspartic-type endopeptidase which contributes to virulence. This chain is Probable aspartic-type endopeptidase OPSB (OPSB), found in Trichophyton verrucosum (strain HKI 0517).